A 440-amino-acid polypeptide reads, in one-letter code: Trigger factor (440 aa).

The PPIase FKBP-type domain maps to 162-247; sequence GDRVTFDFTG…LKKIEKFQLP (86 aa).

It belongs to the FKBP-type PPIase family. Tig subfamily.

It is found in the cytoplasm. The catalysed reaction is [protein]-peptidylproline (omega=180) = [protein]-peptidylproline (omega=0). Functionally, involved in protein export. Acts as a chaperone by maintaining the newly synthesized protein in an open conformation. Functions as a peptidyl-prolyl cis-trans isomerase. The sequence is that of Trigger factor from Hamiltonella defensa subsp. Acyrthosiphon pisum (strain 5AT).